The chain runs to 256 residues: Thiazole synthase (256 aa).

The Schiff-base intermediate with DXP role is filled by lysine 95. 1-deoxy-D-xylulose 5-phosphate is bound by residues glycine 156, 182–183, and 204–205; these read AG and NT.

This sequence belongs to the ThiG family. As to quaternary structure, homotetramer. Forms heterodimers with either ThiH or ThiS.

The protein localises to the cytoplasm. The enzyme catalyses [ThiS sulfur-carrier protein]-C-terminal-Gly-aminoethanethioate + 2-iminoacetate + 1-deoxy-D-xylulose 5-phosphate = [ThiS sulfur-carrier protein]-C-terminal Gly-Gly + 2-[(2R,5Z)-2-carboxy-4-methylthiazol-5(2H)-ylidene]ethyl phosphate + 2 H2O + H(+). It functions in the pathway cofactor biosynthesis; thiamine diphosphate biosynthesis. Its function is as follows. Catalyzes the rearrangement of 1-deoxy-D-xylulose 5-phosphate (DXP) to produce the thiazole phosphate moiety of thiamine. Sulfur is provided by the thiocarboxylate moiety of the carrier protein ThiS. In vitro, sulfur can be provided by H(2)S. This chain is Thiazole synthase, found in Salmonella paratyphi A (strain ATCC 9150 / SARB42).